We begin with the raw amino-acid sequence, 418 residues long: Putative ion-transport protein YfeO (418 aa).

The next 11 membrane-spanning stretches (helical) occupy residues 9-31 (MLLLSLPAVAIGIASSLILIMVM), 55-77 (SPLWIIGVLTLTGIAVGLVIRFS), 90-112 (LIGAPIPPSALPGLIVALILGLA), 122-140 (PIITVNIALAVAIGARLLP), 147-169 (WTILASAGTIGALFGTPVAAALI), 189-211 (PLMAAAAGALTTGLFFHPHFSLP), 223-244 (ILSGAIVAAIAIAAGMVAVWCL), 259-281 (FVLGIGGFILGILGVIGGPVSLF), 301-323 (YFLLAVIKLAALVVAAASGFRGG), 343-363 (VPAVPAAITVSCAILGIVLVV), and 376-398 (VVVPNTTLLPLLCIVMLPAWLLL).

Belongs to the chloride channel (TC 2.A.49) family.

It is found in the cell membrane. The protein is Putative ion-transport protein YfeO (yfeO) of Escherichia coli O6:H1 (strain CFT073 / ATCC 700928 / UPEC).